The following is a 750-amino-acid chain: Meiosis protein mei2 (750 aa).

The segment at 1–20 is disordered; it reads MIMETESPLSITSPSPSDST. Positions 7–20 are enriched in polar residues; that stretch reads SPLSITSPSPSDST. 2 consecutive RRM domains span residues 195 to 270 and 293 to 361; these read RYLF…FCQR and LLLN…CLQV.

As to quaternary structure, binds rad24 when phosphorylated. Post-translationally, inactivated by phosphorylation by ran1/pat1.

Its function is as follows. Crucial for commitment to meiosis but it is not sufficient itself for the commitment. May be a splicing regulator. This chain is Meiosis protein mei2 (mei2), found in Schizosaccharomyces pombe (strain 972 / ATCC 24843) (Fission yeast).